A 479-amino-acid polypeptide reads, in one-letter code: Flavonol 3-O-glucosyltransferase UGT71C4 (479 aa).

Residue H17 is the Proton acceptor of the active site. H17 serves as a coordination point for an anthocyanidin. D127 functions as the Charge relay in the catalytic mechanism. UDP-alpha-D-glucose-binding residues include T150, A350, Q352, H367, W370, N371, S372, and E375. An an anthocyanidin-binding site is contributed by A390. UDP-alpha-D-glucose-binding residues include E391 and Q392.

It belongs to the UDP-glycosyltransferase family.

The catalysed reaction is a flavonol + UDP-alpha-D-glucose = a flavonol 3-O-beta-D-glucoside + UDP + H(+). The enzyme catalyses a 7-O-hydroxy-flavonol + UDP-alpha-D-glucose = a flavonol 7-O-beta-D-glucoside + UDP + H(+). Functionally, possesses quercetin 3-O-glucosyltransferase and 7-O-glucosyltransferase activities in vitro. Also active in vitro on benzoates and benzoate derivatives. In Arabidopsis thaliana (Mouse-ear cress), this protein is Flavonol 3-O-glucosyltransferase UGT71C4.